Here is a 156-residue protein sequence, read N- to C-terminus: ATP synthase subunit b (156 aa).

The helical transmembrane segment at 11–31 (AIAFVLFVLFCMKYVWPPLMA) threads the bilayer.

Belongs to the ATPase B chain family. F-type ATPases have 2 components, F(1) - the catalytic core - and F(0) - the membrane proton channel. F(1) has five subunits: alpha(3), beta(3), gamma(1), delta(1), epsilon(1). F(0) has three main subunits: a(1), b(2) and c(10-14). The alpha and beta chains form an alternating ring which encloses part of the gamma chain. F(1) is attached to F(0) by a central stalk formed by the gamma and epsilon chains, while a peripheral stalk is formed by the delta and b chains.

It is found in the cell inner membrane. Functionally, f(1)F(0) ATP synthase produces ATP from ADP in the presence of a proton or sodium gradient. F-type ATPases consist of two structural domains, F(1) containing the extramembraneous catalytic core and F(0) containing the membrane proton channel, linked together by a central stalk and a peripheral stalk. During catalysis, ATP synthesis in the catalytic domain of F(1) is coupled via a rotary mechanism of the central stalk subunits to proton translocation. In terms of biological role, component of the F(0) channel, it forms part of the peripheral stalk, linking F(1) to F(0). This chain is ATP synthase subunit b, found in Shigella boydii serotype 18 (strain CDC 3083-94 / BS512).